We begin with the raw amino-acid sequence, 610 residues long: Aspartate--tRNA(Asp/Asn) ligase (610 aa).

Glutamate 177 provides a ligand contact to L-aspartate. Residues 201–204 form an aspartate region; the sequence is QLFK. An L-aspartate-binding site is contributed by arginine 223. Residues 223–225 and glutamine 232 each bind ATP; that span reads RDE. Histidine 461 contributes to the L-aspartate binding site. Glutamate 499 contacts ATP. L-aspartate is bound at residue arginine 506. 551–554 is an ATP binding site; it reads GVDR.

The protein belongs to the class-II aminoacyl-tRNA synthetase family. Type 1 subfamily. As to quaternary structure, homodimer.

The protein localises to the cytoplasm. It carries out the reaction tRNA(Asx) + L-aspartate + ATP = L-aspartyl-tRNA(Asx) + AMP + diphosphate. In terms of biological role, aspartyl-tRNA synthetase with relaxed tRNA specificity since it is able to aspartylate not only its cognate tRNA(Asp) but also tRNA(Asn). Reaction proceeds in two steps: L-aspartate is first activated by ATP to form Asp-AMP and then transferred to the acceptor end of tRNA(Asp/Asn). The polypeptide is Aspartate--tRNA(Asp/Asn) ligase (Parasynechococcus marenigrum (strain WH8102)).